A 254-amino-acid chain; its full sequence is Ubiquinone/menaquinone biosynthesis C-methyltransferase UbiE (254 aa).

S-adenosyl-L-methionine-binding positions include Thr-77, Asp-98, 126-127, and Ser-143; that span reads DA.

This sequence belongs to the class I-like SAM-binding methyltransferase superfamily. MenG/UbiE family.

It carries out the reaction a 2-demethylmenaquinol + S-adenosyl-L-methionine = a menaquinol + S-adenosyl-L-homocysteine + H(+). The enzyme catalyses a 2-methoxy-6-(all-trans-polyprenyl)benzene-1,4-diol + S-adenosyl-L-methionine = a 5-methoxy-2-methyl-3-(all-trans-polyprenyl)benzene-1,4-diol + S-adenosyl-L-homocysteine + H(+). It participates in quinol/quinone metabolism; menaquinone biosynthesis; menaquinol from 1,4-dihydroxy-2-naphthoate: step 2/2. The protein operates within cofactor biosynthesis; ubiquinone biosynthesis. In terms of biological role, methyltransferase required for the conversion of demethylmenaquinol (DMKH2) to menaquinol (MKH2) and the conversion of 2-polyprenyl-6-methoxy-1,4-benzoquinol (DDMQH2) to 2-polyprenyl-3-methyl-6-methoxy-1,4-benzoquinol (DMQH2). This is Ubiquinone/menaquinone biosynthesis C-methyltransferase UbiE from Blochmanniella pennsylvanica (strain BPEN).